The sequence spans 86 residues: Large ribosomal subunit protein eL20 (86 aa).

Belongs to the eukaryotic ribosomal protein eL20 family. As to quaternary structure, part of the 50S ribosomal subunit. Binds 23S rRNA.

The sequence is that of Large ribosomal subunit protein eL20 from Sulfolobus acidocaldarius (strain ATCC 33909 / DSM 639 / JCM 8929 / NBRC 15157 / NCIMB 11770).